Here is a 261-residue protein sequence, read N- to C-terminus: MYTDLKDKVVVITGGSTGLGRAMAVRFGQEEAKVVINYYNNEEEALDAKKEVEEAGGQAIIVQGDVTKEEDVVNLVQTAIKEFGTLDVMINNAGVENPVPSHELSLDNWNKVIDTNLTGAFLGSREAIKYFVENDIKGNVINMSSVHEMIPWPLFVHYAASKGGMKLMTETLALEYAPKGIRVNNIGPGAMNTPINAEKFADPVQRADVESMIPMGYIGKPEEVAAVAAFLASSQASYVTGITLFADGGMTKYPSFQAGRG.

11–35 (VITGGSTGLGRAMAVRFGQEEAKVV) contributes to the NAD(+) binding site. Substrate is bound at residue Ser-145. Tyr-158 functions as the Proton acceptor in the catalytic mechanism.

It belongs to the short-chain dehydrogenases/reductases (SDR) family. As to quaternary structure, homotetramer.

The enzyme catalyses D-glucose + NAD(+) = D-glucono-1,5-lactone + NADH + H(+). It carries out the reaction D-glucose + NADP(+) = D-glucono-1,5-lactone + NADPH + H(+). This is Glucose 1-dehydrogenase 4 (gdhIV) from Priestia megaterium (Bacillus megaterium).